A 152-amino-acid chain; its full sequence is UPF0266 membrane protein YobD (152 aa).

The next 3 helical transmembrane spans lie at 6–26 (LVLI…QFIM), 45–65 (IDSV…VTNH), and 67–87 (ALIT…IFWI).

It belongs to the UPF0266 family.

Its subcellular location is the cell inner membrane. This chain is UPF0266 membrane protein YobD, found in Escherichia coli O45:K1 (strain S88 / ExPEC).